The sequence spans 405 residues: MERLQKQPLTSPGSVSSSRDSSVPGSPSSIVAKMDNQVLGYKDLAAIPKDKAILDIERPDLMIYEPHFTYSLLEHVELPRSRECSLSPKSTSPPPSPEVWAESRTLGIISQASTPRTTGTPRTSLPHFHHPETTRPDSNIYKKPPIYKQRESVGGSPQSKHLIEDLIIESSKFPAAQPPDPNQPAKIETDYWPCPPSLAVVETEWRKRKASRKGAEEEEEEEDDDSEEEIKAIRERQKEELSKVTSNLGKMILKEEMEKSLPIRRKTRSLPDRTPFHTSLHSGTSKSSSLPSYGRTTLSRLQSTEFSPSGSEAGSPGLQNGEGQRGRMDRGNSLPCVLEQKIYPYEMLVVTNKGRTKLPPGVDRMRLERHLSAEDFSRVFAMSPEEFGKLALWKRNELKKKASLF.

Disordered regions lie at residues 1-29 (MERL…SPSS), 81-100 (SREC…PEVW), and 108-332 (IISQ…DRGN). The span at 11 to 29 (SPGSVSSSRDSSVPGSPSS) shows a compositional bias: low complexity. 7 positions are modified to phosphoserine: serine 16, serine 18, serine 26, serine 92, serine 96, serine 110, and serine 113. Positions 113–124 (STPRTTGTPRTS) are enriched in low complexity. Threonine 114 carries the phosphothreonine modification. Serine 156 and serine 226 each carry phosphoserine. Residues 216 to 228 (EEEEEEEDDDSEE) are compositionally biased toward acidic residues. Positions 224-308 (DDSEEEIKAI…SRLQSTEFSP (85 aa)) are interaction with RASGRF2. Basic and acidic residues-rich tracts occupy residues 229 to 242 (EIKA…EELS) and 252 to 261 (ILKEEMEKSL). 8 positions are modified to phosphoserine: serine 269, serine 279, serine 289, serine 303, serine 315, serine 333, serine 372, and serine 383. The segment covering 277-292 (HTSLHSGTSKSSSLPS) has biased composition (low complexity). The span at 294–322 (GRTTLSRLQSTEFSPSGSEAGSPGLQNGE) shows a compositional bias: polar residues. An HP domain is found at 337–405 (VLEQKIYPYE…NELKKKASLF (69 aa)). Serine 403 carries the post-translational modification Phosphoserine; by PKA.

It belongs to the villin/gelsolin family. Monomeric (isoform 2); under reducing conditions. Self-associates. Exists under oxidizing condition as a trimer of two isoforms 2 and isoform 1 linked by disulfide bonds. Found in a complex with DMTN, F-actin and spectrin. Found in a complex with ADD2, DMTN and SLC2A1. Interacts with F-actin, ITPKB and spectrin. Isoform 2 interacts with SLC2A1 (via C-terminus cytoplasmic region). Interacts with RASGRF2. In terms of processing, phosphorylated. Phosphorylation at Ser-403 by PKA causes the C-terminal headpiece domain to associate with the N-terminal core domain, and leads to the inhibition of its actin bundling activity. Expressed in platelets. Isoform 1 and isoform 2 are expressed in mature erythrocytes (at protein level).

It is found in the cytoplasm. It localises to the cytosol. The protein localises to the perinuclear region. Its subcellular location is the cytoskeleton. The protein resides in the cell membrane. It is found in the membrane. It localises to the endomembrane system. The protein localises to the cell projection. In terms of biological role, membrane-cytoskeleton-associated protein with F-actin-binding activity that induces F-actin bundles formation and stabilization. Its F-actin-bundling activity is reversibly regulated upon its phosphorylation by the cAMP-dependent protein kinase A (PKA). Binds to the erythrocyte membrane glucose transporter-1 SLC2A1/GLUT1, and hence stabilizes and attaches the spectrin-actin network to the erythrocytic plasma membrane. Plays a role in maintaining the functional integrity of PKA-activated erythrocyte shape and the membrane mechanical properties. Also plays a role as a modulator of actin dynamics in fibroblasts; acts as a negative regulator of the RhoA activation pathway. In platelets, functions as a regulator of internal calcium mobilization across the dense tubular system that affects platelet granule secretion pathways and aggregation. Also required for the formation of a diverse set of cell protrusions, such as filopodia and lamellipodia, necessary for platelet cell spreading, motility and migration. Acts as a tumor suppressor and inhibits malignant cell transformation. The polypeptide is Dematin (Dmtn) (Mus musculus (Mouse)).